The following is a 234-amino-acid chain: Potassium/proton antiporter CemA (234 aa).

4 helical membrane-spanning segments follow: residues 8 to 28, 117 to 137, 157 to 177, and 193 to 213; these read IPLR…WIPL, TICF…LFIL, ILFV…ELLI, and IILS…FKYW.

Belongs to the CemA family.

The protein localises to the plastid. It localises to the chloroplast inner membrane. It carries out the reaction K(+)(in) + H(+)(out) = K(+)(out) + H(+)(in). Its function is as follows. Contributes to K(+)/H(+) antiport activity by supporting proton efflux to control proton extrusion and homeostasis in chloroplasts in a light-dependent manner to modulate photosynthesis. Prevents excessive induction of non-photochemical quenching (NPQ) under continuous-light conditions. Indirectly promotes efficient inorganic carbon uptake into chloroplasts. The protein is Potassium/proton antiporter CemA of Citrus sinensis (Sweet orange).